A 221-amino-acid polypeptide reads, in one-letter code: Putative 5'(3')-deoxyribonucleotidase R824 (221 aa).

Positions 16 and 18 each coordinate Mg(2+). The active-site Nucleophile is D18. Positions 18, 103, and 138 each coordinate phosphate. A Mg(2+)-binding site is contributed by D149.

This sequence belongs to the 5'(3')-deoxyribonucleotidase family. Mg(2+) serves as cofactor.

Functionally, dephosphorylates the 5' and 2'(3')-phosphates of deoxyribonucleotides. The protein is Putative 5'(3')-deoxyribonucleotidase R824 of Acanthamoeba polyphaga mimivirus (APMV).